Reading from the N-terminus, the 166-residue chain is Ribosome maturation factor RimM (166 aa).

Positions 91–163 (EDEFYEFQLI…KMQITPPEGW (73 aa)) constitute a PRC barrel domain.

This sequence belongs to the RimM family. Binds ribosomal protein uS19.

The protein resides in the cytoplasm. An accessory protein needed during the final step in the assembly of 30S ribosomal subunit, possibly for assembly of the head region. Essential for efficient processing of 16S rRNA. May be needed both before and after RbfA during the maturation of 16S rRNA. It has affinity for free ribosomal 30S subunits but not for 70S ribosomes. The protein is Ribosome maturation factor RimM of Sulfurihydrogenibium sp. (strain YO3AOP1).